Consider the following 374-residue polypeptide: Tetraacyldisaccharide 4'-kinase (374 aa).

ATP is bound at residue 43–50 (TMGGTGKT).

The protein belongs to the LpxK family.

It carries out the reaction a lipid A disaccharide + ATP = a lipid IVA + ADP + H(+). The protein operates within glycolipid biosynthesis; lipid IV(A) biosynthesis; lipid IV(A) from (3R)-3-hydroxytetradecanoyl-[acyl-carrier-protein] and UDP-N-acetyl-alpha-D-glucosamine: step 6/6. Functionally, transfers the gamma-phosphate of ATP to the 4'-position of a tetraacyldisaccharide 1-phosphate intermediate (termed DS-1-P) to form tetraacyldisaccharide 1,4'-bis-phosphate (lipid IVA). This Leptospira biflexa serovar Patoc (strain Patoc 1 / Ames) protein is Tetraacyldisaccharide 4'-kinase.